A 132-amino-acid polypeptide reads, in one-letter code: Phosphomevalonate dehydratase small subunit (132 aa).

Serine 62 acts as the Proton acceptor in catalysis.

This sequence belongs to the AcnX type II small subunit family. Heterodimer composed of a large subunit (PMDh-L) and a small subunit (PMDh-S).

The enzyme catalyses (R)-5-phosphomevalonate = (2E)-3-methyl-5-phosphooxypent-2-enoate + H2O. It functions in the pathway isoprenoid biosynthesis; isopentenyl diphosphate biosynthesis via mevalonate pathway. Component of a hydro-lyase that catalyzes the dehydration of mevalonate 5-phosphate (MVA5P) to form trans-anhydromevalonate 5-phosphate (tAHMP). Involved in the archaeal mevalonate (MVA) pathway, which provides fundamental precursors for isoprenoid biosynthesis, such as isopentenyl diphosphate (IPP) and dimethylallyl diphosphate (DMAPP). In Methanocella arvoryzae (strain DSM 22066 / NBRC 105507 / MRE50), this protein is Phosphomevalonate dehydratase small subunit.